A 144-amino-acid polypeptide reads, in one-letter code: Deoxyuridine 5'-triphosphate nucleotidohydrolase (144 aa).

Substrate-binding positions include 63 to 65 (RSG), Asn-76, and 80 to 82 (TID).

The protein belongs to the dUTPase family. The cofactor is Mg(2+).

It carries out the reaction dUTP + H2O = dUMP + diphosphate + H(+). The protein operates within pyrimidine metabolism; dUMP biosynthesis; dUMP from dCTP (dUTP route): step 2/2. Its function is as follows. This enzyme is involved in nucleotide metabolism: it produces dUMP, the immediate precursor of thymidine nucleotides and it decreases the intracellular concentration of dUTP so that uracil cannot be incorporated into DNA. This chain is Deoxyuridine 5'-triphosphate nucleotidohydrolase, found in Phocaeicola vulgatus (strain ATCC 8482 / DSM 1447 / JCM 5826 / CCUG 4940 / NBRC 14291 / NCTC 11154) (Bacteroides vulgatus).